The chain runs to 93 residues: Large ribosomal subunit protein uL23cz/uL23cy (93 aa).

It belongs to the universal ribosomal protein uL23 family. Part of the 50S ribosomal subunit.

The protein resides in the plastid. It is found in the chloroplast. Its function is as follows. Binds to 23S rRNA. This chain is Large ribosomal subunit protein uL23cz/uL23cy (rpl23-A), found in Nandina domestica (Heavenly bamboo).